The chain runs to 264 residues: MAVGKNKRLTKGGKKGAKKKIVDPFSKKDWYDVKAPAMFNIRNLGKTLVTRTQGTKIASDGLKGRVFEVSLADLQNDEVAFRKFKLITEDVQGKNCLTNFHGMDLTRDKMCSMVKKWQTMIEAHVDVKTTDGYLLRLFCVGFTKKRNNQIRKTSYAQHQQVRQIRKKMFEIMTREVQTNDLKEVVNKLIPDSIGKDIEKACQSIYPLHDVYVRKVKMLKKPKFELGKLMELHGEGGGTGKPAGDETGAKVERADGYEPPVQESV.

A disordered region spans residues 233 to 264 (GEGGGTGKPAGDETGAKVERADGYEPPVQESV). Basic and acidic residues predominate over residues 242-255 (AGDETGAKVERADG).

It belongs to the eukaryotic ribosomal protein eS1 family. As to quaternary structure, component of the small ribosomal subunit. Mature ribosomes consist of a small (40S) and a large (60S) subunit. The 40S subunit contains about 33 different proteins and 1 molecule of RNA (18S). The 60S subunit contains about 49 different proteins and 3 molecules of RNA (28S, 5.8S and 5S). Part of the small subunit (SSU) processome, composed of more than 70 proteins and the RNA chaperone small nucleolar RNA (snoRNA) U3.

It is found in the cytoplasm. It localises to the nucleus. Its subcellular location is the nucleolus. Component of the small ribosomal subunit. The ribosome is a large ribonucleoprotein complex responsible for the synthesis of proteins in the cell. Part of the small subunit (SSU) processome, first precursor of the small eukaryotic ribosomal subunit. During the assembly of the SSU processome in the nucleolus, many ribosome biogenesis factors, an RNA chaperone and ribosomal proteins associate with the nascent pre-rRNA and work in concert to generate RNA folding, modifications, rearrangements and cleavage as well as targeted degradation of pre-ribosomal RNA by the RNA exosome. May play a role during erythropoiesis. The chain is Small ribosomal subunit protein eS1A (rps3a-a) from Xenopus laevis (African clawed frog).